Reading from the N-terminus, the 144-residue chain is Maximins 9/H3 (144 aa).

Positions 1 to 18 are cleaved as a signal peptide; that stretch reads MNFKYIVAVSFLIASAYA. A propeptide spanning residues 19–43 is cleaved from the precursor; that stretch reads RSVKNDEQSLSQRDVLEEESLREIR. Tyrosine 70 is subject to Tyrosine amide. Positions 74–123 are excised as a propeptide; that stretch reads TAEEHEVMKRLEAIMRDLDSLDHPEEASERETRGFNQDEIANLFTKKEKR. Isoleucine amide is present on isoleucine 143.

The protein belongs to the bombinin family. Expressed by the skin glands.

Its subcellular location is the secreted. In terms of biological role, maximin-9 shows antimicrobial activity against bacteria and against the fungus C.albicans. It has little hemolytic activity. Its function is as follows. Maximin-H3 shows antibacterial activity against both Gram-positive and Gram-negative bacteria. It also shows antimicrobial activity against the fungus C.albicans. Shows strong hemolytic activity. The chain is Maximins 9/H3 from Bombina maxima (Giant fire-bellied toad).